Consider the following 338-residue polypeptide: 1-aminocyclopropane-1-carboxylate deaminase (338 aa).

Lysine 51 is modified (N6-(pyridoxal phosphate)lysine). The active-site Nucleophile is the serine 78.

This sequence belongs to the ACC deaminase/D-cysteine desulfhydrase family. As to quaternary structure, homotrimer. Requires pyridoxal 5'-phosphate as cofactor.

It carries out the reaction 1-aminocyclopropane-1-carboxylate + H2O = 2-oxobutanoate + NH4(+). Its function is as follows. Catalyzes a cyclopropane ring-opening reaction, the irreversible conversion of 1-aminocyclopropane-1-carboxylate (ACC) to ammonia and alpha-ketobutyrate. Allows growth on ACC as a nitrogen source. The sequence is that of 1-aminocyclopropane-1-carboxylate deaminase from Pseudomonas fluorescens.